Consider the following 481-residue polypeptide: RAC-beta serine/threonine-protein kinase (481 aa).

Met-1 bears the N-acetylmethionine mark. Residues 5–108 (SVIKEGWLHK…WIRAIQMVAN (104 aa)) enclose the PH domain. Ser-34 carries the post-translational modification Phosphoserine. An intrachain disulfide couples Cys-60 to Cys-77. A Phosphoserine modification is found at Ser-126. Ser-128 and Ser-131 each carry an O-linked (GlcNAc) serine glycan. The Protein kinase domain maps to 152–409 (FDYLKLLGKG…AKEVMEHRFF (258 aa)). Residues 158–166 (LGKGTFGKV) and Lys-181 each bind ATP. The active-site Proton acceptor is the Asp-275. Residues Asn-280 and Asp-293 each coordinate Mn(2+). Thr-306 carries O-linked (GlcNAc) threonine glycosylation. Position 309 is a phosphothreonine; by PDPK1 (Thr-309). Thr-313 is a glycosylation site (O-linked (GlcNAc) threonine). The AGC-kinase C-terminal domain occupies 410 to 481 (LSINWQDVVQ…QFSYSASIRE (72 aa)). Ser-447 bears the Phosphoserine mark. Residue Thr-451 is modified to Phosphothreonine. Ser-461, Ser-474, and Ser-478 each carry phosphoserine. The O-linked (GlcNAc) serine; alternate glycan is linked to Ser-474.

The protein belongs to the protein kinase superfamily. AGC Ser/Thr protein kinase family. RAC subfamily. Interacts with BTBD10. Interacts with KCTD20. Interacts (via PH domain) with MTCP1, TCL1A and TCL1B; this interaction may facilitate AKT2 oligomerization and phosphorylation, hence increasing kinase activity. Interacts with PHB2; this interaction may be important for myogenic differentiation. Interacts (when phosphorylated) with CLIP3; this interaction promotes cell membrane localization. Interacts with WDFY2 (via WD repeats 1-3). Phosphorylation on Thr-309 and Ser-474 is required for full activity. Phosphorylation of the activation loop at Thr-309 by PDPK1/PDK1 is a prerequisite for full activation. Phosphorylated and activated by PDPK1/PDK1 in the presence of phosphatidylinositol 3,4,5-trisphosphate. Phosphorylation by mTORC2 in response to growth factors plays a key role in AKT1 activation: mTORC2 phosphorylates different sites depending on the context, such as Ser-474 or Ser-478, thereby facilitating subsequent phosphorylation of the activation loop by PDPK1/PDK1. In terms of processing, ubiquitinated; undergoes both 'Lys-48'- and 'Lys-63'-linked polyubiquitination. TRAF6-induced 'Lys-63'-linked AKT2 ubiquitination. When fully phosphorylated and translocated into the nucleus, undergoes 'Lys-48'-polyubiquitination catalyzed by TTC3, leading to its degradation by the proteasome. Post-translationally, O-GlcNAcylation at Thr-306 and Thr-313 inhibits activating phosphorylation at Thr-309 via disrupting the interaction between AKT and PDPK1/PDK1. Expressed in adipocytes and hepatocytes (at protein level). Expressed at low levels in skeletal muscle (at protein level).

The protein localises to the cytoplasm. Its subcellular location is the nucleus. The protein resides in the cell membrane. It is found in the early endosome. The enzyme catalyses L-seryl-[protein] + ATP = O-phospho-L-seryl-[protein] + ADP + H(+). The catalysed reaction is L-threonyl-[protein] + ATP = O-phospho-L-threonyl-[protein] + ADP + H(+). With respect to regulation, phosphorylation at Thr-309 (in the kinase domain) and Ser-474 (in the C-terminal regulatory region) is required for full activation. In adipocytes and hepatocytes, the activation is induced by insulin. AKT2 phosphorylation of PKP1 is induced by insulin. Serine/threonine kinase closely related to AKT1 and AKT3. All 3 enzymes, AKT1, AKT2 and AKT3, are collectively known as AKT kinase. AKT regulates many processes including metabolism, proliferation, cell survival, growth and angiogenesis, through the phosphorylation of a range of downstream substrates. Over 100 substrates have been reported so far, although for most of them, the precise AKT kinase catalyzing the reaction was not specified. AKT regulates glucose uptake by mediating insulin-induced translocation of the SLC2A4/GLUT4 glucose transporter to the cell surface. Phosphorylation of PTPN1 at 'Ser-50' negatively modulates its phosphatase activity preventing dephosphorylation of the insulin receptor and the attenuation of insulin signaling. Phosphorylation of TBC1D4 triggers the binding of this effector to inhibitory 14-3-3 proteins, which is required for insulin-stimulated glucose transport. AKT also regulates the storage of glucose in the form of glycogen by phosphorylating GSK3A at 'Ser-21' and GSK3B at 'Ser-9', resulting in inhibition of its kinase activity. Phosphorylation of GSK3 isoforms by AKT is also thought to be one mechanism by which cell proliferation is driven. AKT also regulates cell survival via the phosphorylation of MAP3K5 (apoptosis signal-related kinase). Phosphorylation of 'Ser-83' decreases MAP3K5 kinase activity stimulated by oxidative stress and thereby prevents apoptosis. AKT mediates insulin-stimulated protein synthesis by phosphorylating TSC2 at 'Ser-939' and 'Thr-1462', thereby activating mTORC1 signaling and leading to both phosphorylation of 4E-BP1 and in activation of RPS6KB1. AKT is involved in the phosphorylation of members of the FOXO factors (Forkhead family of transcription factors), leading to binding of 14-3-3 proteins and cytoplasmic localization. In particular, FOXO1 is phosphorylated at 'Thr-24', 'Ser-256' and 'Ser-319'. FOXO3 and FOXO4 are phosphorylated on equivalent sites. AKT has an important role in the regulation of NF-kappa-B-dependent gene transcription and positively regulates the activity of CREB1 (cyclic AMP (cAMP)-response element binding protein). The phosphorylation of CREB1 induces the binding of accessory proteins that are necessary for the transcription of pro-survival genes such as BCL2 and MCL1. AKT phosphorylates 'Ser-454' on ATP citrate lyase (ACLY), thereby potentially regulating ACLY activity and fatty acid synthesis. Activates the 3B isoform of cyclic nucleotide phosphodiesterase (PDE3B) via phosphorylation of 'Ser-273', resulting in reduced cyclic AMP levels and inhibition of lipolysis. Phosphorylates PIKFYVE on 'Ser-318', which results in increased PI(3)P-5 activity. The Rho GTPase-activating protein DLC1 is another substrate and its phosphorylation is implicated in the regulation cell proliferation and cell growth. AKT plays a role as key modulator of the AKT-mTOR signaling pathway controlling the tempo of the process of newborn neurons integration during adult neurogenesis, including correct neuron positioning, dendritic development and synapse formation. Signals downstream of phosphatidylinositol 3-kinase (PI(3)K) to mediate the effects of various growth factors such as platelet-derived growth factor (PDGF), epidermal growth factor (EGF), insulin and insulin-like growth factor 1 (IGF1). AKT mediates the antiapoptotic effects of IGF1. Essential for the SPATA13-mediated regulation of cell migration and adhesion assembly and disassembly. May be involved in the regulation of the placental development. In response to lysophosphatidic acid stimulation, inhibits the ciliogenesis cascade. In this context, phosphorylates WDR44, hence stabilizing its interaction with Rab11 and preventing the formation of the ciliogenic Rab11-FIP3-RAB3IP complex. Also phosphorylates RAB3IP/Rabin8, thus may affect RAB3IP guanine nucleotide exchange factor (GEF) activity toward Rab8, which is important for cilia growth. Phosphorylates PKP1, facilitating its interaction with YWHAG and translocation to the nucleus, ultimately resulting in a reduction in keratinocyte intercellular adhesion. Phosphorylation of PKP1 increases PKP1 protein stability, translocation to the cytoplasm away from desmosome plaques and PKP1-driven cap-dependent translation. Its function is as follows. Several AKT2-specific substrates have been identified, including ANKRD2, C2CD5, CLK2 and PITX2. May play a role in myoblast differentiation. In this context, may act through PITX2 phosphorylation. Unphosphorylated PITX2 associates with an ELAVL1/HuR-containing complex, which stabilizes cyclin mRNA and ensuring cell proliferation. Phosphorylation by AKT2 impairs this association, leading to CCND1 mRNA destabilization and progression towards differentiation. Also involved in the negative regulation of myogenesis in response to stress conditions. In this context, acts by phosphorylating ANKRD2. May also be a key regulator of glucose uptake. Regulates insulin-stimulated glucose transport by the increase of glucose transporter GLUT4 translocation from intracellular stores to the plasma membrane. In this context, acts by phosphorylating C2CD5/CDP138 on 'Ser-197' in insulin-stimulated adipocytes. Through the phosphorylation of CLK2 on 'Thr-343', involved in insulin-regulated suppression of hepatic gluconeogenesis. In Rattus norvegicus (Rat), this protein is RAC-beta serine/threonine-protein kinase.